Reading from the N-terminus, the 367-residue chain is Deoxyhypusine synthase-like protein (367 aa).

Residues 1 to 23 (MKSLFQRRASKVRETEAMNAPVP) are disordered.

The protein belongs to the deoxyhypusine synthase family.

This is Deoxyhypusine synthase-like protein from Caulobacter vibrioides (strain ATCC 19089 / CIP 103742 / CB 15) (Caulobacter crescentus).